We begin with the raw amino-acid sequence, 67 residues long: Conotoxin AbVIO (67 aa).

The N-terminal stretch at 1 to 17 (VIIIAVLFLTACQLIAT) is a signal peptide. Positions 18–40 (ASYARSERKHPDLRLSSRNSKLS) are excised as a propeptide. 3 disulfides stabilise this stretch: C43/C57, C50/C61, and C56/C66.

It belongs to the conotoxin O1 superfamily. Expressed by the venom duct.

The protein localises to the secreted. This is Conotoxin AbVIO from Conus abbreviatus (Abbreviated cone).